Consider the following 388-residue polypeptide: Cuticle-degrading protease (388 aa).

Positions 1–18 are cleaved as a signal peptide; it reads MHLSALLTLLPAVLAAPA. Residues 19 to 107 constitute a propeptide that is removed on maturation; the sequence is TIGRRAEPAP…IEKDAVMRIS (89 aa). The 66-residue stretch at 41–106 folds into the Inhibitor I9 domain; that stretch reads KYIVKFKDDI…FIEKDAVMRI (66 aa). The Peptidase S8 domain occupies 116-388; it reads PWGLGRISHR…TVNYLAYNGA (273 aa). Cystine bridges form between Cys143-Cys233 and Cys288-Cys360. Catalysis depends on charge relay system residues Asp148 and His179. Residue Asn296 is glycosylated (N-linked (GlcNAc...) asparagine). Ser334 functions as the Charge relay system in the catalytic mechanism.

Belongs to the peptidase S8 family.

It is found in the secreted. Capable of breaching the insect cuticle. In Metarhizium anisopliae (Entomophthora anisopliae), this protein is Cuticle-degrading protease (PR1).